Reading from the N-terminus, the 339-residue chain is Methionine import ATP-binding protein MetN 2 (339 aa).

The region spanning 2–241 is the ABC transporter domain; it reads ISFNNVSKVY…PKTKTTQNFV (240 aa). 38 to 45 contributes to the ATP binding site; sequence GFSGAGKS.

This sequence belongs to the ABC transporter superfamily. Methionine importer (TC 3.A.1.24) family. The complex is composed of two ATP-binding proteins (MetN), two transmembrane proteins (MetI) and a solute-binding protein (MetQ).

It is found in the cell membrane. The catalysed reaction is L-methionine(out) + ATP + H2O = L-methionine(in) + ADP + phosphate + H(+). It catalyses the reaction D-methionine(out) + ATP + H2O = D-methionine(in) + ADP + phosphate + H(+). Functionally, part of the ABC transporter complex MetNIQ involved in methionine import. Responsible for energy coupling to the transport system. This Bacillus cereus (strain ZK / E33L) protein is Methionine import ATP-binding protein MetN 2.